We begin with the raw amino-acid sequence, 256 residues long: Thiazole synthase (256 aa).

Lys96 (schiff-base intermediate with DXP) is an active-site residue. 1-deoxy-D-xylulose 5-phosphate contacts are provided by residues Gly157, 184–185 (AG), and 206–207 (NT).

This sequence belongs to the ThiG family. Homotetramer. Forms heterodimers with either ThiH or ThiS.

It is found in the cytoplasm. It carries out the reaction [ThiS sulfur-carrier protein]-C-terminal-Gly-aminoethanethioate + 2-iminoacetate + 1-deoxy-D-xylulose 5-phosphate = [ThiS sulfur-carrier protein]-C-terminal Gly-Gly + 2-[(2R,5Z)-2-carboxy-4-methylthiazol-5(2H)-ylidene]ethyl phosphate + 2 H2O + H(+). Its pathway is cofactor biosynthesis; thiamine diphosphate biosynthesis. In terms of biological role, catalyzes the rearrangement of 1-deoxy-D-xylulose 5-phosphate (DXP) to produce the thiazole phosphate moiety of thiamine. Sulfur is provided by the thiocarboxylate moiety of the carrier protein ThiS. In vitro, sulfur can be provided by H(2)S. In Brucella anthropi (strain ATCC 49188 / DSM 6882 / CCUG 24695 / JCM 21032 / LMG 3331 / NBRC 15819 / NCTC 12168 / Alc 37) (Ochrobactrum anthropi), this protein is Thiazole synthase.